A 241-amino-acid chain; its full sequence is Chromosome partition protein MukE (241 aa).

A disordered region spans residues 207–241; that stretch reads DGEAATPDSLSQEKSAVKNDEEIEDELDEGLGEEE. Residues 227 to 241 show a composition bias toward acidic residues; it reads EEIEDELDEGLGEEE.

Belongs to the MukE family. Interacts, and probably forms a ternary complex, with MukF and MukB. The complex formation is stimulated by calcium or magnesium.

Its subcellular location is the cytoplasm. It is found in the nucleoid. Functionally, involved in chromosome condensation, segregation and cell cycle progression. May participate in facilitating chromosome segregation by condensation DNA from both sides of a centrally located replisome during cell division. Probably acts via its interaction with MukB and MukF. The polypeptide is Chromosome partition protein MukE (Mannheimia succiniciproducens (strain KCTC 0769BP / MBEL55E)).